A 148-amino-acid polypeptide reads, in one-letter code: Cell division protein SepF (148 aa).

It belongs to the SepF family. In terms of assembly, homodimer. Interacts with FtsZ.

Its subcellular location is the cytoplasm. Cell division protein that is part of the divisome complex and is recruited early to the Z-ring. Probably stimulates Z-ring formation, perhaps through the cross-linking of FtsZ protofilaments. Its function overlaps with FtsA. The sequence is that of Cell division protein SepF from Alkaliphilus metalliredigens (strain QYMF).